A 396-amino-acid polypeptide reads, in one-letter code: Elongation factor Tu (396 aa).

The 197-residue stretch at 10-206 (KPHVNVGTIG…ALDTYIPTPE (197 aa)) folds into the tr-type G domain. A G1 region spans residues 19–26 (GHVDHGKT). Residue 19–26 (GHVDHGKT) coordinates GTP. Mg(2+) is bound at residue Thr26. The G2 stretch occupies residues 60–64 (GITIN). The tract at residues 81-84 (DCPG) is G3. GTP-binding positions include 81–85 (DCPGH) and 136–139 (NKCD). The segment at 136–139 (NKCD) is G4. The interval 174–176 (SAK) is G5.

It belongs to the TRAFAC class translation factor GTPase superfamily. Classic translation factor GTPase family. EF-Tu/EF-1A subfamily. Monomer.

The protein resides in the cytoplasm. It carries out the reaction GTP + H2O = GDP + phosphate + H(+). GTP hydrolase that promotes the GTP-dependent binding of aminoacyl-tRNA to the A-site of ribosomes during protein biosynthesis. The sequence is that of Elongation factor Tu from Cupriavidus necator (strain ATCC 17699 / DSM 428 / KCTC 22496 / NCIMB 10442 / H16 / Stanier 337) (Ralstonia eutropha).